A 215-amino-acid polypeptide reads, in one-letter code: MLEKRLLRMGMRLQLLRDRRISSRGPGLHRAKADPQQQKRLTTGLMTQAETQKEAQQRQAAMRKTALWHTGHLQPKTHTHTGMHTQTHRERERNTQRLRDRERRENGRHTHRHTHTLTHTHTHRDTHTASYRRGIETHTTRQPLRLRGSAHDENDPRVREQPRGTQADLSSRSRMAARLLGRLTPTNTVRAGLRLGSRAASPDPAWGFLIVVGPL.

Residues 74–172 (QPKTHTHTGM…RGTQADLSSR (99 aa)) are disordered. The segment covering 87-108 (THRERERNTQRLRDRERRENGR) has biased composition (basic and acidic residues). A compositionally biased stretch (basic residues) spans 109 to 122 (HTHRHTHTLTHTHT). 2 stretches are compositionally biased toward basic and acidic residues: residues 123 to 139 (HRDT…ETHT) and 149 to 162 (SAHD…REQP). Residues 163 to 172 (RGTQADLSSR) are compositionally biased toward polar residues.

This sequence belongs to the FAM27 family.

The chain is Protein FAM27D1 (FAM27D1) from Homo sapiens (Human).